We begin with the raw amino-acid sequence, 494 residues long: Aspartyl/glutamyl-tRNA(Asn/Gln) amidotransferase subunit B (494 aa).

This sequence belongs to the GatB/GatE family. GatB subfamily. Heterotrimer of A, B and C subunits.

The enzyme catalyses L-glutamyl-tRNA(Gln) + L-glutamine + ATP + H2O = L-glutaminyl-tRNA(Gln) + L-glutamate + ADP + phosphate + H(+). The catalysed reaction is L-aspartyl-tRNA(Asn) + L-glutamine + ATP + H2O = L-asparaginyl-tRNA(Asn) + L-glutamate + ADP + phosphate + 2 H(+). Functionally, allows the formation of correctly charged Asn-tRNA(Asn) or Gln-tRNA(Gln) through the transamidation of misacylated Asp-tRNA(Asn) or Glu-tRNA(Gln) in organisms which lack either or both of asparaginyl-tRNA or glutaminyl-tRNA synthetases. The reaction takes place in the presence of glutamine and ATP through an activated phospho-Asp-tRNA(Asn) or phospho-Glu-tRNA(Gln). This chain is Aspartyl/glutamyl-tRNA(Asn/Gln) amidotransferase subunit B, found in Protochlamydia amoebophila (strain UWE25).